The sequence spans 994 residues: Alanine--tRNA ligase, chloroplastic/mitochondrial (994 aa).

Positions 1–29 (MGGLKLPPQTLHGIHGGRRPLTAPSSKPS) are disordered. Zn(2+) contacts are provided by His672, His676, Cys774, and His778.

It belongs to the class-II aminoacyl-tRNA synthetase family. As to quaternary structure, monomer. Requires Zn(2+) as cofactor.

Its subcellular location is the plastid. The protein localises to the chloroplast. It is found in the mitochondrion. It carries out the reaction tRNA(Ala) + L-alanine + ATP = L-alanyl-tRNA(Ala) + AMP + diphosphate. Functionally, catalyzes the attachment of alanine to tRNA(Ala) in a two-step reaction: alanine is first activated by ATP to form Ala-AMP and then transferred to the acceptor end of tRNA(Ala). Also edits incorrectly charged tRNA(Ala) via its editing domain. The protein is Alanine--tRNA ligase, chloroplastic/mitochondrial of Populus trichocarpa (Western balsam poplar).